The primary structure comprises 192 residues: Cell division protein SepF (192 aa).

The tract at residues 15–70 (GDPLEYEEDGEEYEQVYREENKREEARRATAGTAAAATPTAAAQASDAAPMGSGPA) is disordered. Positions 18-28 (LEYEEDGEEYE) are enriched in acidic residues. Basic and acidic residues predominate over residues 29–42 (QVYREENKREEARR). The span at 43 to 63 (ATAGTAAAATPTAAAQASDAA) shows a compositional bias: low complexity.

The protein belongs to the SepF family. As to quaternary structure, homodimer. Interacts with FtsZ.

It is found in the cytoplasm. In terms of biological role, cell division protein that is part of the divisome complex and is recruited early to the Z-ring. Probably stimulates Z-ring formation, perhaps through the cross-linking of FtsZ protofilaments. Its function overlaps with FtsA. This Gloeobacter violaceus (strain ATCC 29082 / PCC 7421) protein is Cell division protein SepF.